A 968-amino-acid polypeptide reads, in one-letter code: MPFTLGQRWISDTESELGLGTVVAVDTRMVTLLFPATGENRLYARNDSPITRVVFNPGDTITSHEGWQLDVDEITTANGVVSYIGTRLDTSETGVVLREVMLDSKLVFGKPQDRLFAGQLDRMDRFALRFRARKYQSEQYRLATSGLRGMRTSLIPHQLHIAHDVGRRHAPRVLLADEVGLGKTIEAGMIIHQQLQAGRAERVLIVVPETLQHQWLVEMLRRFNLRFALFDDDRYAQAQLDSDNPFDTEQMIICSLDFVRRNKQRLEKLADAEWDLMVVDEAHHLVWSEDAPSREYQVIEQLAEQVPGILLLTATPEQLGMESHFARLRLLDPDRFHDFAQFVEEQKHFSPIADAVTLLLADQKIGNDELNLLNDLMGEQDIEPLLQTANSDREGKLAARQELISMLMDRHGTSRVLFRNTRNGVKGFPKRELHQIRLPLPTQYQTAIKVSGIMSARKTADERAQDMLYPEQIYQEFEGDSGTWWNFDPRVEWLMGYLTSNRDKKVLVICAKAATALQLEQVLREREGIRAAVFHEGLSIIERDRAAAWFASEEDGAQVLLCSEIGSEGRNFQFASQMVMFDLPFNPDLLEQRIGRLDRIGQVHDIQIHVPYLEKTAQAVLVQWYHEGLDAFEHTCPTGRAVYDSVYTQLIAYLAAPENSEGLEAFIQHCRKQHDTLKAQLEQGRDRLLELNSNGGEKGQALADMIAEQDNNIELVNFALNLFDIVGINQEDRSDNLIVLTPGDHMLVPDFPGLPEDGCTITFDRNQALSREDAQYVSWEHPIIRNGLDLILSGDTGSCAISLLKNKALPVGTLLVELIYVVEAQAPKHLQLTRFLPPTPIRMMVDRKGNNLAAKVEFESFNRQLNAVNRHTGSKLVNAVQSDVHEIITLSEDQAAAEARKVIDAARQEADEKLSAELSRLQALSAVNPNIRQDEIDALESNRQQVLSNLDEAGWRLDALRLIVVTHQ.

In terms of domain architecture, Helicase ATP-binding spans 164–334; it reads DVGRRHAPRV…FARLRLLDPD (171 aa). 177 to 184 lines the ATP pocket; it reads DEVGLGKT. A DEAH box motif is present at residues 280–283; that stretch reads DEAH. One can recognise a Helicase C-terminal domain in the interval 490–643; it reads RVEWLMGYLT…HTCPTGRAVY (154 aa).

The protein belongs to the SNF2/RAD54 helicase family. RapA subfamily. In terms of assembly, interacts with the RNAP. Has a higher affinity for the core RNAP than for the holoenzyme. Its ATPase activity is stimulated by binding to RNAP.

Functionally, transcription regulator that activates transcription by stimulating RNA polymerase (RNAP) recycling in case of stress conditions such as supercoiled DNA or high salt concentrations. Probably acts by releasing the RNAP, when it is trapped or immobilized on tightly supercoiled DNA. Does not activate transcription on linear DNA. Probably not involved in DNA repair. The protein is RNA polymerase-associated protein RapA of Erwinia tasmaniensis (strain DSM 17950 / CFBP 7177 / CIP 109463 / NCPPB 4357 / Et1/99).